A 106-amino-acid chain; its full sequence is Met repressor (106 aa).

The protein belongs to the MetJ family. As to quaternary structure, homodimer.

It localises to the cytoplasm. Its function is as follows. This regulatory protein, when combined with SAM (S-adenosylmethionine) represses the expression of the methionine regulon and of enzymes involved in SAM synthesis. This chain is Met repressor, found in Vibrio campbellii (strain ATCC BAA-1116).